The following is a 180-amino-acid chain: Molybdopterin synthase catalytic subunit (180 aa).

Residues 123 to 124, Lys-139, and 146 to 148 contribute to the substrate site; these read HR and KLE. The disordered stretch occupies residues 161 to 180; the sequence is RDGQKGVKVEGGKEGVEAKH.

It belongs to the MoaE family. MOCS2B subfamily. In terms of assembly, heterotetramer; composed of 2 small (MOCS2A) and 2 large (MOCS2B) subunits.

The protein localises to the cytoplasm. The enzyme catalyses 2 [molybdopterin-synthase sulfur-carrier protein]-C-terminal-Gly-aminoethanethioate + cyclic pyranopterin phosphate + H2O = molybdopterin + 2 [molybdopterin-synthase sulfur-carrier protein]-C-terminal Gly-Gly + 2 H(+). The protein operates within cofactor biosynthesis; molybdopterin biosynthesis. Its function is as follows. Catalytic subunit of the molybdopterin synthase complex, a complex that catalyzes the conversion of precursor Z into molybdopterin. Acts by mediating the incorporation of 2 sulfur atoms from thiocarboxylated MOCS2A into precursor Z to generate a dithiolene group. The sequence is that of Molybdopterin synthase catalytic subunit from Pyrenophora tritici-repentis (strain Pt-1C-BFP) (Wheat tan spot fungus).